A 418-amino-acid polypeptide reads, in one-letter code: UDP-N-acetylglucosamine 1-carboxyvinyltransferase (418 aa).

22-23 (KN) provides a ligand contact to phosphoenolpyruvate. Arg-91 contacts UDP-N-acetyl-alpha-D-glucosamine. Residue Cys-115 is the Proton donor of the active site. Cys-115 bears the 2-(S-cysteinyl)pyruvic acid O-phosphothioketal mark. UDP-N-acetyl-alpha-D-glucosamine-binding positions include 120–124 (RPVDL), Asp-305, and Ile-327.

This sequence belongs to the EPSP synthase family. MurA subfamily.

The protein resides in the cytoplasm. It carries out the reaction phosphoenolpyruvate + UDP-N-acetyl-alpha-D-glucosamine = UDP-N-acetyl-3-O-(1-carboxyvinyl)-alpha-D-glucosamine + phosphate. Its pathway is cell wall biogenesis; peptidoglycan biosynthesis. In terms of biological role, cell wall formation. Adds enolpyruvyl to UDP-N-acetylglucosamine. This Wigglesworthia glossinidia brevipalpis protein is UDP-N-acetylglucosamine 1-carboxyvinyltransferase.